Consider the following 385-residue polypeptide: 26S proteasome non-ATPase regulatory subunit 13 (385 aa).

Residues 176-347 (EFYKNALMYL…EIIHITWVTP (172 aa)) form the PCI domain.

It belongs to the proteasome subunit S11 family.

In terms of biological role, acts as a regulatory subunit of the 26S proteasome which is involved in the ATP-dependent degradation of ubiquitinated proteins. The protein is 26S proteasome non-ATPase regulatory subunit 13 (psmD13) of Dictyostelium discoideum (Social amoeba).